A 230-amino-acid chain; its full sequence is Modulator of macroautophagy TMEM150B-A (230 aa).

Residue M1 is a topological domain, cytoplasmic. Residues 2-22 form a helical membrane-spanning segment; sequence WAWALLPICLTIWATAGIWIV. Residues 23 to 50 are Extracellular-facing; the sequence is YGMSVSNGSVNLSDGFPYISLCGTDPPQ. Residues N29 and N33 are each glycosylated (N-linked (GlcNAc...) asparagine). A helical transmembrane segment spans residues 51 to 71; sequence SCVFGQVLNVGAMLGVWISAI. Over 72–83 the chain is Cytoplasmic; that stretch reads RFQQIRDYNCHS. The helical transmembrane segment at 84–104 threads the bilayer; that stretch reads VLNSVSLAMGILCALGTSIVG. Residues 105–115 are Extracellular-facing; sequence NFQQSNQLETH. A helical membrane pass occupies residues 116–136; it reads LAGAFLAFVIGNIYFWMQTAL. Over 137 to 150 the chain is Cytoplasmic; sequence TYMVKPTHGGCYIG. Residues 151 to 171 traverse the membrane as a helical segment; it reads PIRFCLSVACTALIVLMAVFL. The Extracellular portion of the chain corresponds to 172–183; it reads KMNMKSISAICE. A helical membrane pass occupies residues 184–204; the sequence is WIVAMILFLLYGLFAVDFWHL. At 205-230 the chain is on the cytoplasmic side; sequence DGHYFHVKKRTVIPNEMQVSTVTLSI.

The protein belongs to the DRAM/TMEM150 family.

Its subcellular location is the cell membrane. It localises to the endosome membrane. It is found in the cytoplasmic vesicle. The protein resides in the autophagosome membrane. Modulator of macroautophagy that causes accumulation of autophagosomes under basal conditions and enhances autophagic flux. Represses cell death and promotes long-term clonogenic survival of cells grown in the absence of glucose in a macroautophagy-independent manner. May have some role in extracellular matrix engulfment or growth factor receptor recycling, both of which can modulate cell survival. This is Modulator of macroautophagy TMEM150B-A from Xenopus laevis (African clawed frog).